A 332-amino-acid polypeptide reads, in one-letter code: Large ribosomal subunit protein uL10 (332 aa).

The tract at residues Gln294 to Gly332 is disordered. Residues Asp304 to Ala320 show a composition bias toward acidic residues.

Belongs to the universal ribosomal protein uL10 family. Part of the 50S ribosomal subunit. Forms part of the ribosomal stalk which helps the ribosome interact with GTP-bound translation factors. Forms a heptameric L10(L12)2(L12)2(L12)2 complex, where L10 forms an elongated spine to which the L12 dimers bind in a sequential fashion.

Forms part of the ribosomal stalk, playing a central role in the interaction of the ribosome with GTP-bound translation factors. This is Large ribosomal subunit protein uL10 from Methanosphaera stadtmanae (strain ATCC 43021 / DSM 3091 / JCM 11832 / MCB-3).